The primary structure comprises 314 residues: 4-hydroxy-3-methylbut-2-enyl diphosphate reductase (314 aa).

Cysteine 12 contributes to the [4Fe-4S] cluster binding site. (2E)-4-hydroxy-3-methylbut-2-enyl diphosphate contacts are provided by histidine 41 and histidine 74. 2 residues coordinate dimethylallyl diphosphate: histidine 41 and histidine 74. Positions 41 and 74 each coordinate isopentenyl diphosphate. [4Fe-4S] cluster is bound at residue cysteine 96. Histidine 124 contacts (2E)-4-hydroxy-3-methylbut-2-enyl diphosphate. Histidine 124 is a binding site for dimethylallyl diphosphate. Residue histidine 124 coordinates isopentenyl diphosphate. Glutamate 126 serves as the catalytic Proton donor. Threonine 167 is a (2E)-4-hydroxy-3-methylbut-2-enyl diphosphate binding site. Cysteine 197 is a [4Fe-4S] cluster binding site. (2E)-4-hydroxy-3-methylbut-2-enyl diphosphate is bound by residues serine 225, serine 226, asparagine 227, and serine 269. Serine 225, serine 226, asparagine 227, and serine 269 together coordinate dimethylallyl diphosphate. Isopentenyl diphosphate contacts are provided by serine 225, serine 226, asparagine 227, and serine 269.

The protein belongs to the IspH family. The cofactor is [4Fe-4S] cluster.

It catalyses the reaction isopentenyl diphosphate + 2 oxidized [2Fe-2S]-[ferredoxin] + H2O = (2E)-4-hydroxy-3-methylbut-2-enyl diphosphate + 2 reduced [2Fe-2S]-[ferredoxin] + 2 H(+). It carries out the reaction dimethylallyl diphosphate + 2 oxidized [2Fe-2S]-[ferredoxin] + H2O = (2E)-4-hydroxy-3-methylbut-2-enyl diphosphate + 2 reduced [2Fe-2S]-[ferredoxin] + 2 H(+). Its pathway is isoprenoid biosynthesis; dimethylallyl diphosphate biosynthesis; dimethylallyl diphosphate from (2E)-4-hydroxy-3-methylbutenyl diphosphate: step 1/1. It functions in the pathway isoprenoid biosynthesis; isopentenyl diphosphate biosynthesis via DXP pathway; isopentenyl diphosphate from 1-deoxy-D-xylulose 5-phosphate: step 6/6. In terms of biological role, catalyzes the conversion of 1-hydroxy-2-methyl-2-(E)-butenyl 4-diphosphate (HMBPP) into a mixture of isopentenyl diphosphate (IPP) and dimethylallyl diphosphate (DMAPP). Acts in the terminal step of the DOXP/MEP pathway for isoprenoid precursor biosynthesis. This chain is 4-hydroxy-3-methylbut-2-enyl diphosphate reductase, found in Aliivibrio salmonicida (strain LFI1238) (Vibrio salmonicida (strain LFI1238)).